The following is a 92-amino-acid chain: Small ribosomal subunit protein uS19 (92 aa).

This sequence belongs to the universal ribosomal protein uS19 family.

In terms of biological role, protein S19 forms a complex with S13 that binds strongly to the 16S ribosomal RNA. This Shigella boydii serotype 18 (strain CDC 3083-94 / BS512) protein is Small ribosomal subunit protein uS19.